Reading from the N-terminus, the 334-residue chain is Retinol dehydrogenase 14 (334 aa).

Residue 51 to 57 coordinates NADP(+); the sequence is GANSGLG. Residue Ser190 coordinates substrate. Residue Tyr215 is the Proton acceptor of the active site.

Belongs to the short-chain dehydrogenases/reductases (SDR) family.

It catalyses the reaction all-trans-retinol + NADP(+) = all-trans-retinal + NADPH + H(+). The enzyme catalyses 11-cis-retinol + NADP(+) = 11-cis-retinal + NADPH + H(+). The catalysed reaction is 9-cis-retinol + NADP(+) = 9-cis-retinal + NADPH + H(+). Retinol dehydrogenase with a clear preference for NADP. Displays high activity towards 9-cis, 11-cis and all-trans-retinol. Shows a very weak activity towards 13-cis-retinol. Has no activity towards steroids. The chain is Retinol dehydrogenase 14 (Rdh14) from Mus musculus (Mouse).